A 316-amino-acid polypeptide reads, in one-letter code: Transaldolase (316 aa).

The Schiff-base intermediate with substrate role is filled by Lys132.

This sequence belongs to the transaldolase family. Type 1 subfamily. In terms of assembly, homodimer.

Its subcellular location is the cytoplasm. It catalyses the reaction D-sedoheptulose 7-phosphate + D-glyceraldehyde 3-phosphate = D-erythrose 4-phosphate + beta-D-fructose 6-phosphate. It participates in carbohydrate degradation; pentose phosphate pathway; D-glyceraldehyde 3-phosphate and beta-D-fructose 6-phosphate from D-ribose 5-phosphate and D-xylulose 5-phosphate (non-oxidative stage): step 2/3. Functionally, transaldolase is important for the balance of metabolites in the pentose-phosphate pathway. This Aeromonas salmonicida (strain A449) protein is Transaldolase.